The primary structure comprises 183 residues: UPF0302 protein BH3876 (183 aa).

It belongs to the UPF0302 family.

The polypeptide is UPF0302 protein BH3876 (Halalkalibacterium halodurans (strain ATCC BAA-125 / DSM 18197 / FERM 7344 / JCM 9153 / C-125) (Bacillus halodurans)).